The chain runs to 208 residues: FMN-dependent NADH:quinone oxidoreductase 1 (208 aa).

FMN-binding positions include serine 10, 15 to 17 (SES), and 97 to 100 (MWNF).

The protein belongs to the azoreductase type 1 family. As to quaternary structure, homodimer. FMN is required as a cofactor.

The enzyme catalyses 2 a quinone + NADH + H(+) = 2 a 1,4-benzosemiquinone + NAD(+). It catalyses the reaction N,N-dimethyl-1,4-phenylenediamine + anthranilate + 2 NAD(+) = 2-(4-dimethylaminophenyl)diazenylbenzoate + 2 NADH + 2 H(+). Its function is as follows. Quinone reductase that provides resistance to thiol-specific stress caused by electrophilic quinones. In terms of biological role, also exhibits azoreductase activity. Catalyzes the reductive cleavage of the azo bond in aromatic azo compounds to the corresponding amines. This is FMN-dependent NADH:quinone oxidoreductase 1 from Bradyrhizobium diazoefficiens (strain JCM 10833 / BCRC 13528 / IAM 13628 / NBRC 14792 / USDA 110).